A 457-amino-acid polypeptide reads, in one-letter code: MDYDLIILGAGPAGYIAAEYAGKHKLKTLVIEKQYFGGVCLNVGCIPTKTLLKRAKIIDYLVHAKDYGITINGQAKLDWKQLLKQKQEVVDKLVAGVKTIIKGAKVESIEGEATVIDKNKVQVNNTTYTTNNIIVATGSRPRYLTLPGFEKAQQAGFIIDSTQALALEGVPKKFVVVGGGVIGVEFAFLFASLGSEVTIIQGVDRILEVCDSDVSELISKTLKNKGVQIITNAHVVRAENNQLFYTVNGVEQSVIGDKILVSIGRIANTECLDQLDLKRDHNNKIVLNEKLQTSTTNIYLIGDVNTQMMLAHYAYQQGRYAVDQILNQNQVKPAEKNKCPACIYTNPEVAFVGYSEMELQKEKIDYVKSSLPFIYSGKAIADHETNGFVKMMFNPKTGAILGGCIIASTASDIIAELALVMENNLTVFDIANSISPHPTMNEMVTDVCKKAIFDYFS.

FAD-binding positions include 32–40 (EKQYFGGVC), Lys49, and Ala113. Cysteines 40 and 45 form a disulfide. NAD(+) is bound by residues 178 to 182 (GGGVI), Val235, and 262 to 265 (SIGR). FAD-binding residues include Asp303 and Ala311. His437 acts as the Proton acceptor in catalysis.

This sequence belongs to the class-I pyridine nucleotide-disulfide oxidoreductase family. As to quaternary structure, homodimer. It depends on FAD as a cofactor.

It is found in the cytoplasm. It catalyses the reaction N(6)-[(R)-dihydrolipoyl]-L-lysyl-[protein] + NAD(+) = N(6)-[(R)-lipoyl]-L-lysyl-[protein] + NADH + H(+). Functionally, lipoamide dehydrogenase is a component of the alpha-ketoacid dehydrogenase complexes. The sequence is that of Dihydrolipoyl dehydrogenase (pdhD) from Mycoplasma genitalium (strain ATCC 33530 / DSM 19775 / NCTC 10195 / G37) (Mycoplasmoides genitalium).